Reading from the N-terminus, the 320-residue chain is Protoheme IX farnesyltransferase (320 aa).

The tract at residues 1-24 (MSMITERPVSDPAGQSVSATGDGA) is disordered. A run of 8 helical transmembrane segments spans residues 33–55 (AVVA…VTTV), 68–88 (LWLM…ASVL), 117–137 (NALI…AVFT), 140–160 (LAAG…TAWL), 183–203 (WAAV…VVFF), 241–261 (ILVF…LGAG), 262–282 (MGPI…VEAH), and 300–320 (FHWS…DALI).

The protein belongs to the UbiA prenyltransferase family. Protoheme IX farnesyltransferase subfamily.

The protein localises to the cell membrane. It carries out the reaction heme b + (2E,6E)-farnesyl diphosphate + H2O = Fe(II)-heme o + diphosphate. It functions in the pathway porphyrin-containing compound metabolism; heme O biosynthesis; heme O from protoheme: step 1/1. In terms of biological role, converts heme B (protoheme IX) to heme O by substitution of the vinyl group on carbon 2 of heme B porphyrin ring with a hydroxyethyl farnesyl side group. This chain is Protoheme IX farnesyltransferase, found in Salinispora tropica (strain ATCC BAA-916 / DSM 44818 / JCM 13857 / NBRC 105044 / CNB-440).